Reading from the N-terminus, the 196-residue chain is Molybdenum cofactor guanylyltransferase (196 aa).

Residues L10–G12, K23, N51, D69, and D99 each bind GTP. D99 contacts Mg(2+).

It belongs to the MobA family. Monomer. Requires Mg(2+) as cofactor.

It localises to the cytoplasm. It carries out the reaction Mo-molybdopterin + GTP + H(+) = Mo-molybdopterin guanine dinucleotide + diphosphate. In terms of biological role, transfers a GMP moiety from GTP to Mo-molybdopterin (Mo-MPT) cofactor (Moco or molybdenum cofactor) to form Mo-molybdopterin guanine dinucleotide (Mo-MGD) cofactor. This Shewanella amazonensis (strain ATCC BAA-1098 / SB2B) protein is Molybdenum cofactor guanylyltransferase.